A 150-amino-acid polypeptide reads, in one-letter code: UPF0178 protein Bcep18194_A4809 (150 aa).

It belongs to the UPF0178 family.

This is UPF0178 protein Bcep18194_A4809 from Burkholderia lata (strain ATCC 17760 / DSM 23089 / LMG 22485 / NCIMB 9086 / R18194 / 383).